We begin with the raw amino-acid sequence, 114 residues long: Large ribosomal subunit protein bL19 (114 aa).

Belongs to the bacterial ribosomal protein bL19 family.

Functionally, this protein is located at the 30S-50S ribosomal subunit interface and may play a role in the structure and function of the aminoacyl-tRNA binding site. This Clostridium botulinum (strain Loch Maree / Type A3) protein is Large ribosomal subunit protein bL19.